Consider the following 160-residue polypeptide: Zinc finger A20 and AN1 domain-containing stress-associated protein 5 (160 aa).

An A20-type zinc finger spans residues Thr20–Ala54. Positions 26, 30, 42, 45, 101, 104, 115, 117, 122, 125, 131, and 133 each coordinate Zn(2+). The segment at Gln95–Gly141 adopts an AN1-type zinc-finger fold.

In terms of biological role, may be involved in environmental stress response. This is Zinc finger A20 and AN1 domain-containing stress-associated protein 5 (SAP5) from Arabidopsis thaliana (Mouse-ear cress).